The primary structure comprises 133 residues: Large ribosomal subunit protein bL20 (133 aa).

It belongs to the bacterial ribosomal protein bL20 family.

Binds directly to 23S ribosomal RNA and is necessary for the in vitro assembly process of the 50S ribosomal subunit. It is not involved in the protein synthesizing functions of that subunit. This chain is Large ribosomal subunit protein bL20, found in Rubrobacter xylanophilus (strain DSM 9941 / JCM 11954 / NBRC 16129 / PRD-1).